Here is a 2275-residue protein sequence, read N- to C-terminus: Multifunctional protein pyrABCN (2275 aa).

A GATase (Glutamine amidotransferase) region spans residues 1–440 (MPETVGHEEP…PGPRDTEYLF (440 aa)). L-glutamine contacts are provided by Ser-102, Gly-313, and Gly-315. The region spanning 265 to 453 (RVLCLDVGLK…INAIKDTIAS (189 aa)) is the Glutamine amidotransferase type-1 domain. The active-site Nucleophile; for GATase activity is Cys-342. L-glutamine contacts are provided by Leu-343, Gln-346, Asn-384, Gly-386, and Tyr-387. Catalysis depends on for GATase activity residues His-426 and Glu-428. Residues 441–482 (DVFINAIKDTIASPEALQKPVNFPGGAVAENIKASPRVSVKK) form a linker region. A CPSase (Carbamoyl-phosphate synthase) region spans residues 483 to 1522 (VLILGSGGLS…TNVKNAKILI (1040 aa)). ATP-binding residues include Arg-600, Arg-640, Gly-646, Gly-647, Arg-677, Met-679, Glu-684, Gly-710, Ile-711, His-712, Gln-753, and Glu-767. 2 consecutive ATP-grasp domains span residues 604–796 (ARSM…KLGL) and 1139–1330 (SRML…KAMI). Positions 753, 767, and 769 each coordinate Mg(2+). Mn(2+) contacts are provided by Gln-753, Glu-767, and Asn-769. 10 residues coordinate ATP: Arg-1175, Lys-1214, Ile-1216, Glu-1221, Gly-1246, Val-1247, His-1248, Ser-1249, Gln-1289, and Glu-1301. 3 residues coordinate Mg(2+): Gln-1289, Glu-1301, and Asn-1303. Residues Gln-1289, Glu-1301, and Asn-1303 each contribute to the Mn(2+) site. The MGS-like domain maps to 1396–1575 (FKLPKRNILL…KDFEAVTKAS (180 aa)). The interval 1523–1532 (EAIARHYALN) is linker. The segment at 1533-1862 (VQTIDYQTSH…FQGKTSCLDS (330 aa)) is defective DHOase domain. The tract at residues 1863–1882 (EITPDAPKGSDMSGHRIVPA) is disordered. Residues 1863 to 1953 (EITPDAPKGS…LQMLSRSPFK (91 aa)) are linker. Positions 1954-2258 (QKHVLSVNQF…EFDMLMWMQM (305 aa)) are ATCase (Aspartate transcarbamylase). The carbamoyl phosphate site is built by Arg-2006 and Thr-2007. L-aspartate is bound at residue Lys-2034. The carbamoyl phosphate site is built by Arg-2055, His-2083, and Gln-2086. Residues Arg-2116 and Arg-2178 each contribute to the L-aspartate site. Residues Leu-2217 and Pro-2218 each contribute to the carbamoyl phosphate site.

The protein in the central section; belongs to the metallo-dependent hydrolases superfamily. DHOase family. CAD subfamily. In the N-terminal section; belongs to the CarA family. It in the 2nd section; belongs to the CarB family. This sequence in the 3rd section; belongs to the metallo-dependent hydrolases superfamily. DHOase family. CAD subfamily. The protein in the C-terminal section; belongs to the aspartate/ornithine carbamoyltransferase superfamily. ATCase family. Mg(2+) is required as a cofactor. Mn(2+) serves as cofactor.

It carries out the reaction hydrogencarbonate + L-glutamine + 2 ATP + H2O = carbamoyl phosphate + L-glutamate + 2 ADP + phosphate + 2 H(+). It catalyses the reaction L-glutamine + H2O = L-glutamate + NH4(+). The enzyme catalyses hydrogencarbonate + NH4(+) + 2 ATP = carbamoyl phosphate + 2 ADP + phosphate + 2 H(+). The catalysed reaction is carbamoyl phosphate + L-aspartate = N-carbamoyl-L-aspartate + phosphate + H(+). It participates in pyrimidine metabolism; UMP biosynthesis via de novo pathway; (S)-dihydroorotate from bicarbonate: step 1/3. Its pathway is pyrimidine metabolism; UMP biosynthesis via de novo pathway; (S)-dihydroorotate from bicarbonate: step 2/3. Its function is as follows. Multifunctional protein that encodes the first 2 enzymatic activities of the de novo pyrimidine pathway: carbamoylphosphate synthetase (CPSase; EC 6.3.5.5) and aspartate transcarbamylase (ATCase; EC 2.1.3.2). The CPSase-function is accomplished in 2 steps, by a glutamine-dependent amidotransferase activity (GATase) that binds and cleaves glutamine to produce ammonia, followed by an ammonium-dependent carbamoyl phosphate synthetase, which reacts with the ammonia, hydrogencarbonate and ATP to form carbamoyl phosphate. The endogenously produced carbamoyl phosphate is sequestered and channeled to the ATCase active site. ATCase then catalyzes the formation of carbamoyl-L-aspartate from L-aspartate and carbamoyl phosphate. This Emericella nidulans (strain FGSC A4 / ATCC 38163 / CBS 112.46 / NRRL 194 / M139) (Aspergillus nidulans) protein is Multifunctional protein pyrABCN.